We begin with the raw amino-acid sequence, 568 residues long: Urease subunit alpha (568 aa).

Residues 130 to 568 (GGIDTHIHFI…LPMAQRYFLF (439 aa)) enclose the Urease domain. Ni(2+) is bound by residues His-135, His-137, and Lys-218. An N6-carboxylysine modification is found at Lys-218. Residue His-220 participates in substrate binding. Ni(2+) contacts are provided by His-247 and His-273. The Proton donor role is filled by His-321. Asp-361 serves as a coordination point for Ni(2+).

It belongs to the metallo-dependent hydrolases superfamily. Urease alpha subunit family. Heterotrimer of UreA (gamma), UreB (beta) and UreC (alpha) subunits. Three heterotrimers associate to form the active enzyme. Ni cation is required as a cofactor. Post-translationally, carboxylation allows a single lysine to coordinate two nickel ions.

The protein localises to the cytoplasm. It catalyses the reaction urea + 2 H2O + H(+) = hydrogencarbonate + 2 NH4(+). The protein operates within nitrogen metabolism; urea degradation; CO(2) and NH(3) from urea (urease route): step 1/1. The sequence is that of Urease subunit alpha from Burkholderia pseudomallei (strain 668).